Consider the following 208-residue polypeptide: UPF0637 protein BCG9842_B1177 (208 aa).

This sequence belongs to the UPF0637 family.

This Bacillus cereus (strain G9842) protein is UPF0637 protein BCG9842_B1177.